A 264-amino-acid chain; its full sequence is Tritrans,polycis-undecaprenyl-diphosphate synthase (geranylgeranyl-diphosphate specific) (264 aa).

The active site involves D43. D43 provides a ligand contact to Mg(2+). Substrate-binding positions include 44–47 (GNRR), W48, H60, and 88–90 (STE). N91 (proton acceptor) is an active-site residue. Substrate is bound by residues F92, R94, R213, and 219–221 (RIS). Residue E232 coordinates Mg(2+).

The protein belongs to the UPP synthase family. In terms of assembly, homodimer. Requires Mg(2+) as cofactor.

It catalyses the reaction geranylgeranyl diphosphate + 7 isopentenyl diphosphate = tri-trans,hepta-cis-undecaprenyl diphosphate + 7 diphosphate. In terms of biological role, catalyzes the sequential condensation of isopentenyl diphosphate (IPP) with geranylgeranyl diphosphate (GGPP) to yield (2Z,6Z,10Z,14Z,18Z,22Z,26Z,30E,34E,38E)-undecaprenyl diphosphate (tritrans,heptacis-UPP). It is probably the precursor of glycosyl carrier lipids. The chain is Tritrans,polycis-undecaprenyl-diphosphate synthase (geranylgeranyl-diphosphate specific) from Pyrococcus furiosus (strain ATCC 43587 / DSM 3638 / JCM 8422 / Vc1).